Here is a 650-residue protein sequence, read N- to C-terminus: Glycoprotein antigen BM86 (650 aa).

The N-terminal stretch at 1-19 is a signal peptide; sequence MRGIALFVAAVSLIVEGTA. 2 consecutive EGF-like domains span residues 20-66 and 67-104; these read ESSI…KQCE and YKDT…LQCK. 6 disulfide bridges follow: Cys24–Cys37, Cys32–Cys49, Cys51–Cys65, Cys71–Cys81, Cys76–Cys91, and Cys93–Cys103. N-linked (GlcNAc...) asparagine glycosylation is found at Asn141 and Asn182. EGF-like domains lie at 205-247, 251-292, and 291-335; these read CINA…ITCK, HTVS…DTCI, and CISD…NECL. Cystine bridges form between Cys209–Cys222, Cys218–Cys231, Cys233–Cys246, Cys255–Cys269, Cys263–Cys278, Cys280–Cys291, Cys295–Cys307, Cys300–Cys316, and Cys318–Cys334. N-linked (GlcNAc...) asparagine glycosylation is found at Asn348 and Asn382. EGF-like domains lie at 482–530 and 531–568; these read RRSV…IGCI and ERTT…HECY. Disulfide bonds link Cys486–Cys500, Cys492–Cys516, Cys518–Cys529, Cys535–Cys550, Cys543–Cys559, and Cys561–Cys567. Residues 603–628 are disordered; sequence KSEATTAATTTTKAKDKDPDPGKSSA. A lipid anchor (GPI-anchor amidated serine) is attached at Ser627. A propeptide spans 628 to 650 (removed in mature form); it reads AAAVSATGLLLLLAATSVTAASL.

The protein resides in the cell membrane. This is Glycoprotein antigen BM86 from Rhipicephalus microplus (Cattle tick).